Reading from the N-terminus, the 249-residue chain is 3-deoxy-D-manno-octulosonic acid kinase (249 aa).

D175 is an active-site residue.

Belongs to the protein kinase superfamily. KdkA/RfaP family.

Its subcellular location is the cell inner membrane. It catalyses the reaction an alpha-Kdo-(2-&gt;6)-lipid IVA + ATP = a 4-O-phospho-alpha-Kdo-(2-&gt;6)-lipid IVA + ADP + H(+). Its pathway is bacterial outer membrane biogenesis; LPS core biosynthesis. Catalyzes the ATP-dependent phosphorylation of the 3-deoxy-D-manno-octulosonic acid (Kdo) residue in Kdo-lipid IV(A) at the 4-OH position. This Stenotrophomonas maltophilia (strain K279a) protein is 3-deoxy-D-manno-octulosonic acid kinase.